Reading from the N-terminus, the 338-residue chain is Anthranilate phosphoribosyltransferase (338 aa).

5-phospho-alpha-D-ribose 1-diphosphate contacts are provided by residues Gly82, 85 to 86 (GD), Thr90, 92 to 95 (NIST), 110 to 118 (KHGNRAASS), and Ser122. Residue Gly82 participates in anthranilate binding. Position 94 (Ser94) interacts with Mg(2+). Asn113 contributes to the anthranilate binding site. Arg168 is an anthranilate binding site. Mg(2+)-binding residues include Asp226 and Glu227.

The protein belongs to the anthranilate phosphoribosyltransferase family. Homodimer. The cofactor is Mg(2+).

It catalyses the reaction N-(5-phospho-beta-D-ribosyl)anthranilate + diphosphate = 5-phospho-alpha-D-ribose 1-diphosphate + anthranilate. Its pathway is amino-acid biosynthesis; L-tryptophan biosynthesis; L-tryptophan from chorismate: step 2/5. Functionally, catalyzes the transfer of the phosphoribosyl group of 5-phosphorylribose-1-pyrophosphate (PRPP) to anthranilate to yield N-(5'-phosphoribosyl)-anthranilate (PRA). This is Anthranilate phosphoribosyltransferase from Deinococcus radiodurans (strain ATCC 13939 / DSM 20539 / JCM 16871 / CCUG 27074 / LMG 4051 / NBRC 15346 / NCIMB 9279 / VKM B-1422 / R1).